We begin with the raw amino-acid sequence, 176 residues long: Large ribosomal subunit protein uL6 (176 aa).

It belongs to the universal ribosomal protein uL6 family. Part of the 50S ribosomal subunit.

Its function is as follows. This protein binds to the 23S rRNA, and is important in its secondary structure. It is located near the subunit interface in the base of the L7/L12 stalk, and near the tRNA binding site of the peptidyltransferase center. The polypeptide is Large ribosomal subunit protein uL6 (Burkholderia cenocepacia (strain HI2424)).